The chain runs to 37 residues: Cytochrome b6-f complex subunit 5 (37 aa).

Residues Ile5–Ala25 form a helical membrane-spanning segment.

It belongs to the PetG family. In terms of assembly, the 4 large subunits of the cytochrome b6-f complex are cytochrome b6, subunit IV (17 kDa polypeptide, PetD), cytochrome f and the Rieske protein, while the 4 small subunits are PetG, PetL, PetM and PetN. The complex functions as a dimer.

The protein resides in the cellular thylakoid membrane. Component of the cytochrome b6-f complex, which mediates electron transfer between photosystem II (PSII) and photosystem I (PSI), cyclic electron flow around PSI, and state transitions. PetG is required for either the stability or assembly of the cytochrome b6-f complex. The protein is Cytochrome b6-f complex subunit 5 of Synechococcus sp. (strain JA-2-3B'a(2-13)) (Cyanobacteria bacterium Yellowstone B-Prime).